A 767-amino-acid chain; its full sequence is Cilium assembly protein DZIP1L (767 aa).

Residues 122–144 are disordered; that stretch reads QQRGQQELGRQADELKGVREESR. The span at 131-144 shows a compositional bias: basic and acidic residues; sequence RQADELKGVREESR. A C2H2-type zinc finger spans residues 166-189; that stretch reads HTCHLCDKTFMNATFLRGHIQRRH. Residues 205–406 are a coiled coil; it reads VEEVLEELRA…SQEEMIQSLS (202 aa). A Phosphoserine modification is found at Ser-426. The tract at residues 518-767 is disordered; sequence SRAKERQENG…SSGQPRVPAW (250 aa). Polar residues-rich tracts occupy residues 533–547 and 574–588; these read PDGQPSVKSQQSTLV and RQSHGSHGSSLTQVS. Over residues 607-616 the composition is skewed to low complexity; the sequence is GPGMSTPPFS. Residues 658-675 are compositionally biased toward polar residues; the sequence is ENAQPPGQGSGTLVQSMV. Positions 677-686 are enriched in basic and acidic residues; that stretch reads NLEKQLEAPA.

This sequence belongs to the DZIP C2H2-type zinc-finger protein family. In terms of assembly, interacts with SEPTIN2.

It is found in the cytoplasm. Its subcellular location is the cytoskeleton. The protein resides in the cilium basal body. The protein localises to the microtubule organizing center. It localises to the centrosome. It is found in the centriole. Involved in primary cilium formation. Probably acts as a transition zone protein required for localization of PKD1/PC1 and PKD2/PC2 to the ciliary membrane. The chain is Cilium assembly protein DZIP1L from Homo sapiens (Human).